A 322-amino-acid polypeptide reads, in one-letter code: Adenine deaminase (322 aa).

Positions 11, 13, and 189 each coordinate Zn(2+). Catalysis depends on E192, which acts as the Proton donor. A Zn(2+)-binding site is contributed by D270. D271 serves as a coordination point for substrate.

The protein belongs to the metallo-dependent hydrolases superfamily. Adenosine and AMP deaminases family. Adenine deaminase type 2 subfamily. Zn(2+) serves as cofactor.

It carries out the reaction adenine + H2O + H(+) = hypoxanthine + NH4(+). Catalyzes the hydrolytic deamination of adenine to hypoxanthine. Plays an important role in the purine salvage pathway and in nitrogen catabolism. The protein is Adenine deaminase of Rhizobium etli (strain ATCC 51251 / DSM 11541 / JCM 21823 / NBRC 15573 / CFN 42).